The following is a 309-amino-acid chain: Low density lipoprotein receptor adapter protein 1-A (309 aa).

One can recognise a PID domain in the interval 41–195 (LLEGMLFHLK…SGGEGASSSQ (155 aa)). Residues 179–199 (EKREKSGSGGEGASSSQSDGS) are disordered. The short motif at 213–217 (LLDLE) is the Clathrin box element. The interval 250–277 (WELDDGLDEAFARLAESRTNPQVLDIGL) is AP-2 complex binding. Positions 258 to 267 (EAFARLAESR) match the [DE]-X(1,2)-F-X-X-[FL]-X-X-X-R motif motif.

Interacts (via PID domain) with ldlr (via NPXY motif). Binds to soluble clathrin trimers and to the adapter protein complex 2 (AP-2, beta 2 subunit). Binds to phosphoinositides, which regulate clathrin bud assembly at the cell surface. Interacts with the VLDL receptor (vldlr). Interacts with the vitellogenin receptor. As to expression, expressed at high level during oogenesis and embryogenesis. Found in the oocyte vegetal cortex. Found at low level in the adult liver and spleen. Found at very low level in testis and heart.

The protein localises to the cytoplasm. Functionally, adapter protein (clathrin-associated sorting protein (CLASP)) required for efficient endocytosis of the LDL receptor (LDLR). Also involved in the vitellogenin receptor mediated endocytosis of nutrients during oogenesis. The polypeptide is Low density lipoprotein receptor adapter protein 1-A (Xenopus laevis (African clawed frog)).